The primary structure comprises 318 residues: tRNA-cytidine(32) 2-sulfurtransferase (318 aa).

Residues 65–70 (SGGKDS) carry the PP-loop motif motif. Cysteine 140, cysteine 143, and cysteine 231 together coordinate [4Fe-4S] cluster.

It belongs to the TtcA family. As to quaternary structure, homodimer. It depends on Mg(2+) as a cofactor. [4Fe-4S] cluster is required as a cofactor.

Its subcellular location is the cytoplasm. It catalyses the reaction cytidine(32) in tRNA + S-sulfanyl-L-cysteinyl-[cysteine desulfurase] + AH2 + ATP = 2-thiocytidine(32) in tRNA + L-cysteinyl-[cysteine desulfurase] + A + AMP + diphosphate + H(+). The protein operates within tRNA modification. Functionally, catalyzes the ATP-dependent 2-thiolation of cytidine in position 32 of tRNA, to form 2-thiocytidine (s(2)C32). The sulfur atoms are provided by the cysteine/cysteine desulfurase (IscS) system. In Herminiimonas arsenicoxydans, this protein is tRNA-cytidine(32) 2-sulfurtransferase.